A 557-amino-acid polypeptide reads, in one-letter code: Potassium-transporting ATPase potassium-binding subunit (557 aa).

Helical transmembrane passes span 5–25 (GFLL…PLGS), 63–83 (LCAI…MLLG), 132–152 (GLTV…FAFI), 170–190 (LLRI…LFLI), 253–273 (FVQM…FGEV), 283–303 (LLWA…WAEV), 329–349 (VLVS…AVIA), 356–376 (ALGG…FGGV), 379–399 (GLYG…LMIG), 416–436 (LTAL…ALAM), 484–504 (LLAF…MAIA), and 526–546 (LFVG…FIPA).

The protein belongs to the KdpA family. The system is composed of three essential subunits: KdpA, KdpB and KdpC.

It localises to the cell inner membrane. Functionally, part of the high-affinity ATP-driven potassium transport (or Kdp) system, which catalyzes the hydrolysis of ATP coupled with the electrogenic transport of potassium into the cytoplasm. This subunit binds the periplasmic potassium ions and delivers the ions to the membrane domain of KdpB through an intramembrane tunnel. In Shigella boydii serotype 18 (strain CDC 3083-94 / BS512), this protein is Potassium-transporting ATPase potassium-binding subunit.